Here is a 119-residue protein sequence, read N- to C-terminus: MSQVDKTARRQKIKARSRAVVRGTQERPRLCVFRSLSQIYAQLIDDESGKTLMAASSMSKENAGLTGTKSEVSAAIGKQIAEKALAQGISRVVFDRNGFRYHGRIKALADGAREAGLIF.

Belongs to the universal ribosomal protein uL18 family. As to quaternary structure, part of the 50S ribosomal subunit; part of the 5S rRNA/L5/L18/L25 subcomplex. Contacts the 5S and 23S rRNAs.

In terms of biological role, this is one of the proteins that bind and probably mediate the attachment of the 5S RNA into the large ribosomal subunit, where it forms part of the central protuberance. The chain is Large ribosomal subunit protein uL18 from Chlorobaculum tepidum (strain ATCC 49652 / DSM 12025 / NBRC 103806 / TLS) (Chlorobium tepidum).